The primary structure comprises 232 residues: Large ribosomal subunit protein uL1 (232 aa).

This sequence belongs to the universal ribosomal protein uL1 family. As to quaternary structure, part of the 50S ribosomal subunit.

Binds directly to 23S rRNA. The L1 stalk is quite mobile in the ribosome, and is involved in E site tRNA release. In terms of biological role, protein L1 is also a translational repressor protein, it controls the translation of the L11 operon by binding to its mRNA. The polypeptide is Large ribosomal subunit protein uL1 (Chlamydia trachomatis serovar D (strain ATCC VR-885 / DSM 19411 / UW-3/Cx)).